A 1226-amino-acid chain; its full sequence is DNA-directed RNA polymerase subunit beta (1226 aa).

It belongs to the RNA polymerase beta chain family. As to quaternary structure, the RNAP catalytic core consists of 2 alpha, 1 beta, 1 beta' and 1 omega subunit. When a sigma factor is associated with the core the holoenzyme is formed, which can initiate transcription.

The catalysed reaction is RNA(n) + a ribonucleoside 5'-triphosphate = RNA(n+1) + diphosphate. Its function is as follows. DNA-dependent RNA polymerase catalyzes the transcription of DNA into RNA using the four ribonucleoside triphosphates as substrates. This is DNA-directed RNA polymerase subunit beta from Leptospira interrogans serogroup Icterohaemorrhagiae serovar copenhageni (strain Fiocruz L1-130).